The primary structure comprises 235 residues: Transmembrane protein 215 (235 aa).

The next 2 helical transmembrane spans lie at Leu-12 to Met-32 and Ile-40 to Ala-60. A disordered region spans residues Ser-99–Glu-145. Residues Ser-125–Pro-140 are compositionally biased toward polar residues.

It localises to the membrane. In Homo sapiens (Human), this protein is Transmembrane protein 215 (TMEM215).